We begin with the raw amino-acid sequence, 114 residues long: NADH-ubiquinone oxidoreductase chain 3 (114 aa).

3 helical membrane-spanning segments follow: residues 4-24 (LVYI…SYLL), 55-75 (FYLI…ILPF), and 82-102 (VSLL…IGFI).

Belongs to the complex I subunit 3 family.

Its subcellular location is the mitochondrion membrane. The catalysed reaction is a ubiquinone + NADH + 5 H(+)(in) = a ubiquinol + NAD(+) + 4 H(+)(out). Functionally, core subunit of the mitochondrial membrane respiratory chain NADH dehydrogenase (Complex I) that is believed to belong to the minimal assembly required for catalysis. Complex I functions in the transfer of electrons from NADH to the respiratory chain. The immediate electron acceptor for the enzyme is believed to be ubiquinone. The polypeptide is NADH-ubiquinone oxidoreductase chain 3 (ND3) (Allomyces macrogynus).